Reading from the N-terminus, the 230-residue chain is Fibrillarin-like rRNA/tRNA 2'-O-methyltransferase (230 aa).

Residues 89 to 90, 107 to 108, 132 to 133, and 152 to 155 each bind S-adenosyl-L-methionine; these read TT, EV, DA, and DISQ.

The protein belongs to the methyltransferase superfamily. Fibrillarin family. Interacts with nop5. Component of box C/D small ribonucleoprotein (sRNP) particles that contain rpl7ae, FlpA and nop5, plus a guide RNA.

In terms of biological role, involved in pre-rRNA and tRNA processing. Utilizes the methyl donor S-adenosyl-L-methionine to catalyze the site-specific 2'-hydroxyl methylation of ribose moieties in rRNA and tRNA. Site specificity is provided by a guide RNA that base pairs with the substrate. Methylation occurs at a characteristic distance from the sequence involved in base pairing with the guide RNA. This is Fibrillarin-like rRNA/tRNA 2'-O-methyltransferase from Thermoplasma acidophilum (strain ATCC 25905 / DSM 1728 / JCM 9062 / NBRC 15155 / AMRC-C165).